The primary structure comprises 177 residues: Large ribosomal subunit protein uL6 (177 aa).

This sequence belongs to the universal ribosomal protein uL6 family. Part of the 50S ribosomal subunit.

Its function is as follows. This protein binds to the 23S rRNA, and is important in its secondary structure. It is located near the subunit interface in the base of the L7/L12 stalk, and near the tRNA binding site of the peptidyltransferase center. This is Large ribosomal subunit protein uL6 from Glaesserella parasuis serovar 5 (strain SH0165) (Haemophilus parasuis).